The chain runs to 102 residues: NADH-quinone oxidoreductase subunit K (102 aa).

3 helical membrane passes run 4 to 24 (IGLN…LVGV), 31 to 51 (LMLF…FAAI), and 65 to 85 (FFVI…LIVW).

Belongs to the complex I subunit 4L family. In terms of assembly, NDH-1 is composed of 14 different subunits. Subunits NuoA, H, J, K, L, M, N constitute the membrane sector of the complex.

The protein localises to the cell inner membrane. It catalyses the reaction a quinone + NADH + 5 H(+)(in) = a quinol + NAD(+) + 4 H(+)(out). In terms of biological role, NDH-1 shuttles electrons from NADH, via FMN and iron-sulfur (Fe-S) centers, to quinones in the respiratory chain. The immediate electron acceptor for the enzyme in this species is believed to be ubiquinone. Couples the redox reaction to proton translocation (for every two electrons transferred, four hydrogen ions are translocated across the cytoplasmic membrane), and thus conserves the redox energy in a proton gradient. This is NADH-quinone oxidoreductase subunit K from Sulfurimonas denitrificans (strain ATCC 33889 / DSM 1251) (Thiomicrospira denitrificans (strain ATCC 33889 / DSM 1251)).